The chain runs to 485 residues: Sperm-associated antigen 8 (485 aa).

Disordered stretches follow at residues methionine 1–serine 42, lysine 75–alanine 98, and threonine 127–proline 215. Low complexity predominate over residues serine 132–serine 150. Residues serine 151–serine 191 show a composition bias toward gly residues. 2 mn regions span residues serine 327–asparagine 340 and glutamate 379–alanine 393.

It belongs to the SPAG8 family. In terms of assembly, microtubule inner protein component of sperm flagellar doublet microtubules. Interacts with FHL5 (via second LIM domain). Interacts with RANBP9. In terms of tissue distribution, expressed in testis (germ cells), but not in liver, kidney, prostate and small intestine. Expressed in airway epithelial cells.

It is found in the cytoplasm. The protein resides in the nucleus. The protein localises to the cytoplasmic vesicle. Its subcellular location is the secretory vesicle. It localises to the acrosome. It is found in the cytoskeleton. The protein resides in the microtubule organizing center. The protein localises to the spindle. Its subcellular location is the cilium axoneme. It localises to the flagellum axoneme. In terms of biological role, microtubule inner protein (MIP) part of the dynein-decorated doublet microtubules (DMTs) in cilia axoneme, which is required for motile cilia beating. Plays a role in spermatogenesis by enhancing the binding of CREM isoform tau to its coactivator FHL5 and increasing the FHL5-regulated transcriptional activation of CREM isoform tau. Involved in the acrosome reaction and in binding of sperm to the zona pellucida. Plays a role in regulation of the cell cycle by controlling progression through the G2/M phase, possibly by delaying the activation of CDK1 which is required for entry into mitosis. May play a role in fertility and microtubule formation through interaction with RANBP9. The sequence is that of Sperm-associated antigen 8 from Homo sapiens (Human).